A 91-amino-acid chain; its full sequence is Small ribosomal subunit protein uS19 (91 aa).

The protein belongs to the universal ribosomal protein uS19 family.

Its function is as follows. Protein S19 forms a complex with S13 that binds strongly to the 16S ribosomal RNA. This is Small ribosomal subunit protein uS19 from Pseudomonas fluorescens (strain SBW25).